The following is a 177-amino-acid chain: Large ribosomal subunit protein uL6 (177 aa).

Belongs to the universal ribosomal protein uL6 family. As to quaternary structure, part of the 50S ribosomal subunit.

Its function is as follows. This protein binds to the 23S rRNA, and is important in its secondary structure. It is located near the subunit interface in the base of the L7/L12 stalk, and near the tRNA binding site of the peptidyltransferase center. The protein is Large ribosomal subunit protein uL6 of Histophilus somni (strain 129Pt) (Haemophilus somnus).